The following is a 410-amino-acid chain: Beta-arrestin-2 (410 aa).

The residue at position 48 (Tyr-48) is a Phosphotyrosine. Residues Pro-176 and Pro-181 each carry the hydroxyproline; by PHD2 modification. Residues 241–410 form an interaction with TRAF6 region; that stretch reads ADICLFSTAQ…KDDDCDDQFC (170 aa). A Phosphoserine modification is found at Ser-361. The interaction with AP2B1 stretch occupies residues 364 to 410; that stretch reads RETDVPVDTNLIEFDTNYATDDDIVFEDFARLRLKGMKDDDCDDQFC. At Thr-383 the chain carries Phosphothreonine. The short motif at 386–396 is the [DE]-X(1,2)-F-X-X-[FL]-X-X-X-R motif element; sequence DIVFEDFARLR.

Belongs to the arrestin family. As to quaternary structure, homooligomer; the self-association is mediated by InsP6-binding. Heterooligomer with ARRB1; the association is mediated by InsP6-binding. Interacts with ADRB2 and CHRM2. Interacts with PDE4A. Interacts with PDE4D. Interacts with MAPK10, MAPK1 and MAPK3. Interacts with DRD2. Interacts with FSHR. Interacts with CLTC. Interacts with HTR2C. Interacts with CCR5. Interacts with CXCR4. Interacts with SRC. Interacts with DUSP16; the interaction is interrupted by stimulation of AGTR1 and activation of MAPK10. Interacts with CHUK; the interaction is enhanced stimulation of ADRB2. Interacts with RELA. Interacts with MDM2; the interaction is enhanced by activation of GPCRs. Interacts with SLC9A5. Interacts with TRAF6. Interacts with IGF1R. Interacts with ENG. Interacts with ARRB2. Interacts with KIR2DL1, KIR2DL3 and KIR2DL4. Interacts with LDLR. Interacts with AP2B1. Interacts with C5AR1. Interacts with RAF1. Interacts with MAP2K1. Interacts with MAPK1. Interacts with MAPK10; the interaction enhances MAPK10 activation by MAP3K5. Interacts with MAP2K4; the interaction is enhanced by presence of MAP3K5 and MAPK10. Interacts with MAP3K5. Interacts with AKT1. Interacts with IKBKB and MAP3K14. Interacts with SMO (activated). Interacts with GSK3A and GSK3B. Interacts with CXCR4; the interaction is dependent on C-terminal phosphorylation of CXCR4 and allows activation of MAPK1 and MAPK3. Interacts with GPR143. Interacts with HCK and CXCR1 (phosphorylated). Associates with protein phosphatase 2A (PP2A). Interacts with ACKR3 and ACKR4. Interacts with ARRDC1; the interaction is direct. Interacts with GPR61, GPR62 and GPR135. Interacts (via NACHT and LRR domains) with NLRP3; this interaction is direct and inducible by omega-3 polyunsaturated fatty acids (PUFAs). Interacts with FFAR4 (via C-terminus); this interaction is stimulated by long-chain fatty acids (LCFAs). Interacts with GPR35. Interacts with GPR84. Interacts with TIGIT; this interaction inhibits the NF-kappa-B pathway. Interacts with TGFBR3. Post-translationally, phosphorylated at Thr-383 in the cytoplasm; probably dephosphorylated at the plasma membrane. The phosphorylation does not regulate internalization and recycling of ADRB2, interaction with clathrin or AP2B1. In terms of processing, the ubiquitination status appears to regulate the formation and trafficking of beta-arrestin-GPCR complexes and signaling. Ubiquitination appears to occur GPCR-specific. Ubiquitinated by MDM2; the ubiquitination is required for rapid internalization of ADRB2. Deubiquitinated by USP33; the deubiquitination leads to a dissociation of the beta-arrestin-GPCR complex. Stimulation of a class A GPCR, such as ADRB2, induces transient ubiquitination and subsequently promotes association with USP33. Stimulation of a class B GPCR promotes a sustained ubiquitination. Deubiquitinated by USP20; allowing USP20 to deubiquitinate TRAF6 leading to inhibition of NF-kappa-B signaling. Hydroxylation by PHD2 modulates the rate of internalization by slowing down recruitment to the plasma membrane and inhibiting subsequent co-internalization with class A receptors. As to expression, predominantly localized in neuronal tissues and in the spleen.

The protein localises to the cytoplasm. It localises to the nucleus. The protein resides in the cell membrane. It is found in the membrane. Its subcellular location is the clathrin-coated pit. The protein localises to the cytoplasmic vesicle. Functions in regulating agonist-mediated G-protein coupled receptor (GPCR) signaling by mediating both receptor desensitization and resensitization processes. During homologous desensitization, beta-arrestins bind to the GPRK-phosphorylated receptor and sterically preclude its coupling to the cognate G-protein; the binding appears to require additional receptor determinants exposed only in the active receptor conformation. The beta-arrestins target many receptors for internalization by acting as endocytic adapters (CLASPs, clathrin-associated sorting proteins) and recruiting the GPRCs to the adapter protein 2 complex 2 (AP-2) in clathrin-coated pits (CCPs). However, the extent of beta-arrestin involvement appears to vary significantly depending on the receptor, agonist and cell type. Internalized arrestin-receptor complexes traffic to intracellular endosomes, where they remain uncoupled from G-proteins. Two different modes of arrestin-mediated internalization occur. Class A receptors, like ADRB2, OPRM1, ENDRA, D1AR and ADRA1B dissociate from beta-arrestin at or near the plasma membrane and undergo rapid recycling. Class B receptors, like AVPR2, AGTR1, NTSR1, TRHR and TACR1 internalize as a complex with arrestin and traffic with it to endosomal vesicles, presumably as desensitized receptors, for extended periods of time. Receptor resensitization then requires that receptor-bound arrestin is removed so that the receptor can be dephosphorylated and returned to the plasma membrane. Mediates endocytosis of CCR7 following ligation of CCL19 but not CCL21. Involved in internalization of P2RY1, P2RY4, P2RY6 and P2RY11 and ATP-stimulated internalization of P2RY2. Involved in phosphorylation-dependent internalization of OPRD1 and subsequent recycling or degradation. Involved in ubiquitination of IGF1R. Beta-arrestins function as multivalent adapter proteins that can switch the GPCR from a G-protein signaling mode that transmits short-lived signals from the plasma membrane via small molecule second messengers and ion channels to a beta-arrestin signaling mode that transmits a distinct set of signals that are initiated as the receptor internalizes and transits the intracellular compartment. Acts as a signaling scaffold for MAPK pathways such as MAPK1/3 (ERK1/2) and MAPK10 (JNK3). ERK1/2 and JNK3 activated by the beta-arrestin scaffold are largely excluded from the nucleus and confined to cytoplasmic locations such as endocytic vesicles, also called beta-arrestin signalosomes. Acts as a signaling scaffold for the AKT1 pathway. GPCRs for which the beta-arrestin-mediated signaling relies on both ARRB1 and ARRB2 (codependent regulation) include ADRB2, F2RL1 and PTH1R. For some GPCRs the beta-arrestin-mediated signaling relies on either ARRB1 or ARRB2 and is inhibited by the other respective beta-arrestin form (reciprocal regulation). Increases ERK1/2 signaling in AGTR1- and AVPR2-mediated activation (reciprocal regulation). Involved in CCR7-mediated ERK1/2 signaling involving ligand CCL19. Is involved in type-1A angiotensin II receptor/AGTR1-mediated ERK activity. Is involved in type-1A angiotensin II receptor/AGTR1-mediated MAPK10 activity. Is involved in dopamine-stimulated AKT1 activity in the striatum by disrupting the association of AKT1 with its negative regulator PP2A. Involved in AGTR1-mediated chemotaxis. Appears to function as signaling scaffold involved in regulation of MIP-1-beta-stimulated CCR5-dependent chemotaxis. Involved in attenuation of NF-kappa-B-dependent transcription in response to GPCR or cytokine stimulation by interacting with and stabilizing CHUK. Suppresses UV-induced NF-kappa-B-dependent activation by interacting with CHUK. The function is promoted by stimulation of ADRB2 and dephosphorylation of ARRB2. Involved in IL8-mediated granule release in neutrophils. Involved in p53/TP53-mediated apoptosis by regulating MDM2 and reducing the MDM2-mediated degradation of p53/TP53. May serve as nuclear messenger for GPCRs. Upon stimulation of OR1D2, may be involved in regulation of gene expression during the early processes of fertilization. Also involved in regulation of receptors other than GPCRs. Involved in endocytosis of TGFBR2 and TGFBR3 and down-regulates TGF-beta signaling such as NF-kappa-B activation. Involved in endocytosis of low-density lipoprotein receptor/LDLR. Involved in endocytosis of smoothened homolog/Smo, which also requires GRK2. Involved in endocytosis of SLC9A5. Involved in endocytosis of ENG and subsequent TGF-beta-mediated ERK activation and migration of epithelial cells. Involved in Toll-like receptor and IL-1 receptor signaling through the interaction with TRAF6 which prevents TRAF6 autoubiquitination and oligomerization required for activation of NF-kappa-B and JUN. Involved in insulin resistance by acting as insulin-induced signaling scaffold for SRC, AKT1 and INSR. Involved in regulation of inhibitory signaling of natural killer cells by recruiting PTPN6 and PTPN11 to KIR2DL1. Involved in the internalization of the atypical chemokine receptor ACKR3. Acts as an adapter protein coupling FFAR4 receptor to specific downstream signaling pathways, as well as mediating receptor endocytosis. During the activation step of NLRP3 inflammasome, directly associates with NLRP3 leading to inhibition of pro-inflammatory cytokine release and inhibition of inflammation. The protein is Beta-arrestin-2 (Arrb2) of Mus musculus (Mouse).